The primary structure comprises 380 residues: GATOR1 complex protein NPRL2 (380 aa).

Residues 1-133 are interaction with PDPK1; sequence MGSGCRIECI…SKQKLVPIMT (133 aa). Residue arginine 78 participates in GDP binding. Arginine 78 carries the post-translational modification Asymmetric dimethylarginine. Glycyl lysine isopeptide (Lys-Gly) (interchain with G-Cter in ubiquitin) cross-links involve residues lysine 158 and lysine 357.

This sequence belongs to the NPR2 family. Within the GATOR complex, component of the GATOR1 subcomplex, made of DEPDC5, NPRL2 and NPRL3. GATOR1 mediates the strong interaction of the GATOR complex with small GTPases Rag (RagA/RRAGA, RagB/RRAGB, RagC/RRAGC and/or RagD/RRAGD) heterodimers. GATOR1 interacts with GPR155/LYCHOS; interaction takes place in presence of cholesterol and prevents interaction between GATOR1 and KICSTOR. Interacts with PDPK1. In terms of processing, in the presence of abundant amino acids, ubiquitinated at Lys-158 and Lys-357 via 'Lys-6'-linked ubiquitination by the WDR24 component of the GATOR2 complex, thereby inhibiting the GATOR1 complex and promoting mTORC1 activation. Asymmetric dimethylation at Arg-78 by PRMT1 inhibits the GTPase activator activity of the GATOR1 complex and consequently inducing timely mTORC1 activation under methionine-sufficient conditions. Most abundant in skeletal muscle, followed by brain, liver and pancreas, with lower amounts in lung, kidney, placenta and heart. Expressed in the frontal lobe cortex as well as in the temporal, parietal, and occipital lobes. Expressed in most lung cancer cell lines tested.

It is found in the lysosome membrane. Functionally, catalytic component of the GATOR1 complex, a multiprotein complex that functions as an inhibitor of the amino acid-sensing branch of the mTORC1 pathway. In response to amino acid depletion, the GATOR1 complex has GTPase activating protein (GAP) activity and strongly increases GTP hydrolysis by RagA/RRAGA (or RagB/RRAGB) within heterodimeric Rag complexes, thereby turning them into their inactive GDP-bound form, releasing mTORC1 from lysosomal surface and inhibiting mTORC1 signaling. In the presence of abundant amino acids, the GATOR1 complex is ubiquitinated and inhibited by GATOR2. Within the GATOR1 complex, NPRL2 constitutes the catalytic subunit that mediates the GTPase activator activity and under methionine-sufficient conditions, the GTPase activator activity is inhibited by PRMT1 through methylation and consequently inducing timely mTORC1 activation. Suppresses Src-dependent tyrosine phosphorylation and activation of PDPK1 and its downstream signaling. Down-regulates PDPK1 kinase activity by interfering with tyrosine phosphorylation at 'Tyr-9', 'Tyr-373' and 'Tyr-376' residues. May act as a tumor suppressor. Suppresses cell growth and enhances sensitivity to various anticancer drugs. In Homo sapiens (Human), this protein is GATOR1 complex protein NPRL2.